The following is a 254-amino-acid chain: Low affinity immunoglobulin gamma Fc region receptor III-A (254 aa).

The signal sequence occupies residues 1–16; that stretch reads MWQLLLPTALLLLVSA. The Extracellular segment spans residues 17-208; the sequence is GMRTEDLPKA…ISSFFPPGYQ (192 aa). 2 consecutive Ig-like C2-type domains span residues 24-105 and 107-189; these read PKAV…LEVH and GWLL…VNIT. C47 and C89 are joined by a disulfide. N56, N63, and N92 each carry an N-linked (GlcNAc...) asparagine glycan. The cysteines at positions 128 and 172 are disulfide-linked. Residues N180 and N187 are each glycosylated (N-linked (GlcNAc...) asparagine). Residues 209 to 229 form a helical membrane-spanning segment; sequence VSFCLVMVLLFAVDTGLYFSV. At 230-254 the chain is on the cytoplasmic side; the sequence is KTNIRSSTRDWKDHKFKWRKDPQDK. S236 is subject to Phosphoserine; by PKC. T237 bears the Phosphothreonine; by PKC mark.

As to quaternary structure, forms a heterooligomeric complex with ITAM-containing signaling subunits, either a homodimer of CD247, a homodimer of FCER1G or a heterodimer of CD247 and FCER1G. Interacts (via transmembrane domain) with signaling subunits; this interaction is a prerequisite for receptor complex expression on the cell surface and intracellular signal transduction. Binds the Fc region of antigen-complexed IgG with a preference for IgG1 and IgG3 isotypes. Interacts with CD2; this interaction is involved in NK cell activation and cytotoxicity. Interacts with S100A4; this interaction inhibits PKC-dependent phosphorylation of FCGR3A. In terms of processing, glycosylated. Contains high mannose- and complex-type oligosaccharides. Glycosylation at Asn-180 is mandatory for high affinity binding to the Fc and for discrimination between fucosylated and afucosylated IgG glycoforms. Post-translationally, undergoes rapid ectodomain shedding upon NK cell stimulation. The soluble form is produced by a proteolytic cleavage mediated by ADAM17. Repeated stimulation causes receptor shedding, a mechanism that allows for increased NK cell motility and detachment from opsonized target cells while avoiding activation-induced NK cell apoptosis. Phosphorylated at RSSTR motif by PKC. The relevant physiological PKCs might be PRKCI, PRKCG, PRKCE, PRKCH and PRKCQ. Expressed in natural killer cells (at protein level). Expressed in a subset of circulating monocytes (at protein level).

The protein localises to the cell membrane. It localises to the secreted. In terms of biological role, receptor for the invariable Fc fragment of immunoglobulin gamma (IgG). Optimally activated upon binding of clustered antigen-IgG complexes displayed on cell surfaces, triggers lysis of antibody-coated cells, a process known as antibody-dependent cellular cytotoxicity (ADCC). Does not bind free monomeric IgG, thus avoiding inappropriate effector cell activation in the absence of antigenic trigger. Mediates IgG effector functions on natural killer (NK) cells. Binds antigen-IgG complexes generated upon infection and triggers NK cell-dependent cytokine production and degranulation to limit viral load and propagation. Involved in the generation of memory-like adaptive NK cells capable to produce high amounts of IFNG and to efficiently eliminate virus-infected cells via ADCC. Regulates NK cell survival and proliferation, in particular by preventing NK cell progenitor apoptosis. Fc-binding subunit that associates with CD247 and/or FCER1G adapters to form functional signaling complexes. Following the engagement of antigen-IgG complexes, triggers phosphorylation of immunoreceptor tyrosine-based activation motif (ITAM)-containing adapters with subsequent activation of phosphatidylinositol 3-kinase signaling and sustained elevation of intracellular calcium that ultimately drive NK cell activation. The ITAM-dependent signaling coupled to receptor phosphorylation by PKC mediates robust intracellular calcium flux that leads to production of pro-inflammatory cytokines, whereas in the absence of receptor phosphorylation it mainly activates phosphatidylinositol 3-kinase signaling leading to cell degranulation. Costimulates NK cells and trigger lysis of target cells independently of IgG binding. Mediates the antitumor activities of therapeutic antibodies. Upon ligation on monocytes triggers TNFA-dependent ADCC of IgG-coated tumor cells. Mediates enhanced ADCC in response to afucosylated IgGs. (Microbial infection) Involved in Dengue virus pathogenesis via antibody-dependent enhancement (ADE) mechanism. Secondary infection with Dengue virus triggers elevated levels of afucosylated non-neutralizing IgG1s with reactivity to viral envelope/E protein. Viral antigen-IgG1 complexes bind with high affinity to FCGR3A, facilitating virus entry in myeloid cells and subsequent viral replication. The polypeptide is Low affinity immunoglobulin gamma Fc region receptor III-A (Homo sapiens (Human)).